A 180-amino-acid polypeptide reads, in one-letter code: Adenine phosphoribosyltransferase (180 aa).

It belongs to the purine/pyrimidine phosphoribosyltransferase family. Homodimer.

The protein resides in the cytoplasm. The catalysed reaction is AMP + diphosphate = 5-phospho-alpha-D-ribose 1-diphosphate + adenine. It participates in purine metabolism; AMP biosynthesis via salvage pathway; AMP from adenine: step 1/1. Catalyzes a salvage reaction resulting in the formation of AMP, that is energically less costly than de novo synthesis. The chain is Adenine phosphoribosyltransferase from Mannheimia succiniciproducens (strain KCTC 0769BP / MBEL55E).